Consider the following 179-residue polypeptide: Adenine phosphoribosyltransferase (179 aa).

It belongs to the purine/pyrimidine phosphoribosyltransferase family. In terms of assembly, homodimer.

The protein resides in the cytoplasm. The catalysed reaction is AMP + diphosphate = 5-phospho-alpha-D-ribose 1-diphosphate + adenine. It functions in the pathway purine metabolism; AMP biosynthesis via salvage pathway; AMP from adenine: step 1/1. Functionally, catalyzes a salvage reaction resulting in the formation of AMP, that is energically less costly than de novo synthesis. This chain is Adenine phosphoribosyltransferase, found in Helicobacter pylori (strain G27).